Consider the following 194-residue polypeptide: Protein GrpE 1 (194 aa).

The interval 1–22 (MIHNEEEQLEKKIEKNQDPKIN) is disordered.

This sequence belongs to the GrpE family. As to quaternary structure, homodimer.

The protein localises to the cytoplasm. In terms of biological role, participates actively in the response to hyperosmotic and heat shock by preventing the aggregation of stress-denatured proteins, in association with DnaK and GrpE. It is the nucleotide exchange factor for DnaK and may function as a thermosensor. Unfolded proteins bind initially to DnaJ; upon interaction with the DnaJ-bound protein, DnaK hydrolyzes its bound ATP, resulting in the formation of a stable complex. GrpE releases ADP from DnaK; ATP binding to DnaK triggers the release of the substrate protein, thus completing the reaction cycle. Several rounds of ATP-dependent interactions between DnaJ, DnaK and GrpE are required for fully efficient folding. The protein is Protein GrpE 1 of Buchnera aphidicola subsp. Acyrthosiphon pisum (strain APS) (Acyrthosiphon pisum symbiotic bacterium).